A 505-amino-acid chain; its full sequence is Cytochrome P450 monooxygenase efuB (505 aa).

The chain crosses the membrane as a helical span at residues 12–34 (GFWPTVAGTVATYLFYQIVATVY). A heme-binding site is contributed by cysteine 450.

The protein belongs to the cytochrome P450 family. It depends on heme as a cofactor.

It localises to the membrane. Its pathway is secondary metabolite biosynthesis; terpenoid biosynthesis. Cytochrome P450 monooxygenase; part of the gene cluster that mediates the biosynthesis of enfumafungin, a glycosylated fernene-type triterpenoid with potent antifungal activity, mediated by its interaction with beta-1,3-glucan synthase and the fungal cell wall. The pathway begins with the terpene cyclase-glycosyl transferase fusion protein that most likely uses 2,3-oxidosqualene as substrate and catalyzes glycosylation immediately after cyclization. The fernene glycoside then could be processed by the desaturase efuI which catalyzes isomerization of a double bond established by efuA to form the core structure. The latter would then undergo a series of hydroxylations in unknown order at C-2, C-19, C-23 and C-25, which would be catalyzed by two of the three cytochrome P450 monooxygenases efuB, efuG or efuH. The hydroxy-group at C-25 becomes oxidized by the dehydrogenase efuE to enable a spontaneous, non-enzymatic hemiacetal formation with C-23. After hydroxylation at C-2, acetylation by the acetyltransferase efuC takes place. The final steps in enfumafungin biosynthesis require expansion of the 5-membered ring by lactonization via a Baeyer-Villiger reaction mediated by one of the BGC's cytochrome P450 monooxygenases (efuB, efuG or efuH) followed by ring cleavage. This type of reaction would establish a double bond between C-20 and C-21 which could be reduced by the reductase efuL to form the final product. This Hormonema carpetanum protein is Cytochrome P450 monooxygenase efuB.